The sequence spans 212 residues: Small ribosomal subunit protein uS5 (212 aa).

A disordered region spans residues 1 to 42 (MPGRERRDGGRSADKNDNNKGRNDRGRNDRNNRRGRGRDDDR). The S5 DRBM domain occupies 45–108 (YIERVVTINR…EEARKNFFRV (64 aa)).

The protein belongs to the universal ribosomal protein uS5 family. In terms of assembly, part of the 30S ribosomal subunit. Contacts proteins S4 and S8.

With S4 and S12 plays an important role in translational accuracy. Its function is as follows. Located at the back of the 30S subunit body where it stabilizes the conformation of the head with respect to the body. The sequence is that of Small ribosomal subunit protein uS5 from Corynebacterium kroppenstedtii (strain DSM 44385 / JCM 11950 / CIP 105744 / CCUG 35717).